The following is a 225-amino-acid chain: Imidazole glycerol phosphate synthase subunit HisH (225 aa).

Positions 5–220 (KNVIVDTGCA…LELDSTELNQ (216 aa)) constitute a Glutamine amidotransferase type-1 domain. The active-site Nucleophile is cysteine 80. Active-site residues include histidine 195 and glutamate 197.

Heterodimer of HisH and HisF.

The protein resides in the cytoplasm. The enzyme catalyses 5-[(5-phospho-1-deoxy-D-ribulos-1-ylimino)methylamino]-1-(5-phospho-beta-D-ribosyl)imidazole-4-carboxamide + L-glutamine = D-erythro-1-(imidazol-4-yl)glycerol 3-phosphate + 5-amino-1-(5-phospho-beta-D-ribosyl)imidazole-4-carboxamide + L-glutamate + H(+). The catalysed reaction is L-glutamine + H2O = L-glutamate + NH4(+). Its pathway is amino-acid biosynthesis; L-histidine biosynthesis; L-histidine from 5-phospho-alpha-D-ribose 1-diphosphate: step 5/9. Its function is as follows. IGPS catalyzes the conversion of PRFAR and glutamine to IGP, AICAR and glutamate. The HisH subunit catalyzes the hydrolysis of glutamine to glutamate and ammonia as part of the synthesis of IGP and AICAR. The resulting ammonia molecule is channeled to the active site of HisF. This is Imidazole glycerol phosphate synthase subunit HisH from Colwellia psychrerythraea (strain 34H / ATCC BAA-681) (Vibrio psychroerythus).